Consider the following 236-residue polypeptide: Leucyl/phenylalanyl-tRNA--protein transferase (236 aa).

Belongs to the L/F-transferase family.

The protein localises to the cytoplasm. It carries out the reaction N-terminal L-lysyl-[protein] + L-leucyl-tRNA(Leu) = N-terminal L-leucyl-L-lysyl-[protein] + tRNA(Leu) + H(+). The enzyme catalyses N-terminal L-arginyl-[protein] + L-leucyl-tRNA(Leu) = N-terminal L-leucyl-L-arginyl-[protein] + tRNA(Leu) + H(+). The catalysed reaction is L-phenylalanyl-tRNA(Phe) + an N-terminal L-alpha-aminoacyl-[protein] = an N-terminal L-phenylalanyl-L-alpha-aminoacyl-[protein] + tRNA(Phe). Its function is as follows. Functions in the N-end rule pathway of protein degradation where it conjugates Leu, Phe and, less efficiently, Met from aminoacyl-tRNAs to the N-termini of proteins containing an N-terminal arginine or lysine. This Shewanella putrefaciens (strain CN-32 / ATCC BAA-453) protein is Leucyl/phenylalanyl-tRNA--protein transferase.